The chain runs to 527 residues: GMP synthase [glutamine-hydrolyzing] (527 aa).

Residues 19–212 (KIIVLDYGSQ…AFSICGAKGD (194 aa)) enclose the Glutamine amidotransferase type-1 domain. Cys96 serves as the catalytic Nucleophile. Active-site residues include His186 and Glu188. The GMPS ATP-PPase domain occupies 213 to 402 (WSMANFVDMQ…LGMPDEVVWR (190 aa)). 240 to 246 (SGGVDSS) contributes to the ATP binding site.

In terms of assembly, homodimer.

It carries out the reaction XMP + L-glutamine + ATP + H2O = GMP + L-glutamate + AMP + diphosphate + 2 H(+). The protein operates within purine metabolism; GMP biosynthesis; GMP from XMP (L-Gln route): step 1/1. In terms of biological role, catalyzes the synthesis of GMP from XMP. This chain is GMP synthase [glutamine-hydrolyzing], found in Streptococcus thermophilus (strain CNRZ 1066).